The following is a 549-amino-acid chain: Oxygen-dependent choline dehydrogenase (549 aa).

FAD is bound at residue 4 to 33 (DFVIIGSGSAGSALAYRLSEDGKNSVLVIE). The Proton acceptor role is filled by His465. The disordered stretch occupies residues 530–549 (PLARSNQEPWINPRAAVSDR).

The protein belongs to the GMC oxidoreductase family. FAD serves as cofactor.

It catalyses the reaction choline + A = betaine aldehyde + AH2. It carries out the reaction betaine aldehyde + NAD(+) + H2O = glycine betaine + NADH + 2 H(+). Its pathway is amine and polyamine biosynthesis; betaine biosynthesis via choline pathway; betaine aldehyde from choline (cytochrome c reductase route): step 1/1. In terms of biological role, involved in the biosynthesis of the osmoprotectant glycine betaine. Catalyzes the oxidation of choline to betaine aldehyde and betaine aldehyde to glycine betaine at the same rate. The sequence is that of Oxygen-dependent choline dehydrogenase from Rhizobium etli (strain ATCC 51251 / DSM 11541 / JCM 21823 / NBRC 15573 / CFN 42).